Here is a 241-residue protein sequence, read N- to C-terminus: Ras-like protein 1 (241 aa).

GTP-binding positions include 17–22 (GVGKTA), 33–39 (VETYDPT), 63–64 (AG), 138–141 (NKSD), and 168–170 (SAK). An Effector region motif is present at residues 36–44 (YDPTIEDSY). Positions 190-241 (RQQASRPSLPGNSRTKTGGMGKSESFYQSDGKRGSRKDGEKHRSKPIKCVIL) are disordered. The span at 191-205 (QQASRPSLPGNSRTK) shows a compositional bias: polar residues. Residues 219–230 (DGKRGSRKDGEK) show a composition bias toward basic and acidic residues. Cys238 is subject to Cysteine methyl ester. The S-farnesyl cysteine moiety is linked to residue Cys238. Positions 239–241 (VIL) are cleaved as a propeptide — removed in mature form.

This sequence belongs to the small GTPase superfamily. Ras family. As to quaternary structure, interacts with farnesyltransferase beta subunit RAM1.

It is found in the cell membrane. With respect to regulation, alternates between an inactive form bound to GDP and an active form bound to GTP. Activated by a guanine nucleotide-exchange factor (GEF) and inactivated by a GTPase-activating protein (GAP). Modulates the activity of the adenylate cyclase catalytic subunit and therefore affects the biosynthesis of cyclic-AMP. Plays a role in both surface attachment and surface recognition of appressoria, a highly specialized infection structure for plant penetration. Regulates appressorium formation by coordinated regulation of cAMP signaling and Pmk1 MAPK pathways. This Pyricularia oryzae (strain 70-15 / ATCC MYA-4617 / FGSC 8958) (Rice blast fungus) protein is Ras-like protein 1.